Reading from the N-terminus, the 527-residue chain is Protein PLASTID TRANSCRIPTIONALLY ACTIVE 12, chloroplastic (527 aa).

A chloroplast-targeting transit peptide spans 1-30 (MASISTTTWLYRGQVCTDSGKSSNCIVQRR). Residues 1 to 115 (MASISTTTWL…ASIPGEDYWP (115 aa)) are PHYA-interacting region 1 (PIR1). Residues 89–188 (SYMDSTSGKL…NDSSDGFVTY (100 aa)) are disordered. The span at 163-181 (TNDEVSDSEDSSEEEENDS) shows a compositional bias: acidic residues. Short sequence motifs (nuclear localization signal) lie at residues 204–211 (DKKLGRPH) and 235–242 (WRKPEKEQ). The PHYA-interacting region 2 (PIR2) stretch occupies residues 252–352 (DVETVFLKAM…EMFSHQTDRE (101 aa)). A compositionally biased stretch (acidic residues) spans 458 to 471 (GENDDDEDDADVEK). The interval 458-527 (GENDDDEDDA…LMDFEEETDP (70 aa)) is disordered. Positions 485-504 (ETPELRTAKPKPKKEGRMSL) are enriched in basic and acidic residues. Acidic residues predominate over residues 506–527 (EAVDDAENLTDFLMDFEEETDP). Positions 512-520 (ENLTDFLMD) match the Required and sufficient for transcriptional transactivation activity and to trigger PIF proteins degradation motif.

In terms of assembly, component of the transcriptionally active chromosome (TAC) complexes. Interacts with PTAC14 and PTAC7. Binds directly to PTAC6/PAP8 in the nucleus. Interacts with MED14. Binds to SL1/MTERF3. Binds to photoactivated phytochromes (e.g. PHYA and PHYB) via their photosensory domains; these interactions stimulate its light-mediated accumulation. Associates, via its N-terminal region, with phytochrome-interacting factors (PIFs) including PIF1, PIF3, PIF4, PIF5, PIF6, BHLH72/PIF7, UNE10/PIF8 and PIL1. Binds to RAD4. Associates with MRL7/RCB. Mostly expressed in cotyledons, leaves, stems and flowers, but barely in roots.

The protein resides in the plastid. It localises to the chloroplast. Its subcellular location is the nucleus. Functionally, involved in plastid gene expression. Acidic transcriptional coactivator necessary for the transactivation of many PIFs target genes (class B genes), particularly during the regulation of hypocotyl growth. Plays dual opposite roles in regulating hypocotyl growth, preventing it in red and far-red conditions, but promoting it otherwise. Required in the nucleus for the initiation of photomorphogenesis mediated by phytochromes (PHYs) (e.g. PHYA and PHYB) by mediating PHYs localization to photobodies, especially in response to red and far-red light, and implicating phytochrome nuclear bodies as sites of proteolysis for PHYs and PIFs proteins (e.g. PIF1 and PIF3). Acts downstream of PHYs and upstream of DET1. Involved in UV tolerance in both roots and hypocotyls, specifically in dark conditions. Element of a PIF4/HMR/MED14-dependent thermoresponsive process; acts as a PIF4 transcriptional coactivator to trigger the thermoresponsive growth-relevant genes (e.g. mainly involved in biosynthesis and signaling of the phytohormone auxin) and promote warm-temperature-dependent (e.g. 27 degrees Celsius) PIF4 and MED14 stabilization and accumulation, being more prominently involved in long days (LD) and continuous red light (Rc) than in short days (SD), thus modulating warm temperature elicitation of MED14-dependent thermomorphogenesis (e.g. hypocotyl elongation). This chain is Protein PLASTID TRANSCRIPTIONALLY ACTIVE 12, chloroplastic, found in Arabidopsis thaliana (Mouse-ear cress).